Here is a 274-residue protein sequence, read N- to C-terminus: NH(3)-dependent NAD(+) synthetase (274 aa).

Residue 46-53 coordinates ATP; the sequence is GISGGQDS. Asp52 lines the Mg(2+) pocket. Arg140 is a binding site for deamido-NAD(+). Thr160 lines the ATP pocket. Residue Glu165 coordinates Mg(2+). Deamido-NAD(+)-binding residues include Lys173 and Asp180. Residues Lys189 and Thr211 each contribute to the ATP site. 260-261 is a binding site for deamido-NAD(+); that stretch reads HK.

Belongs to the NAD synthetase family. As to quaternary structure, homodimer.

It carries out the reaction deamido-NAD(+) + NH4(+) + ATP = AMP + diphosphate + NAD(+) + H(+). Its pathway is cofactor biosynthesis; NAD(+) biosynthesis; NAD(+) from deamido-NAD(+) (ammonia route): step 1/1. Its function is as follows. Catalyzes the ATP-dependent amidation of deamido-NAD to form NAD. Uses ammonia as a nitrogen source. The polypeptide is NH(3)-dependent NAD(+) synthetase (Streptococcus pneumoniae serotype 19F (strain G54)).